The sequence spans 100 residues: Small ribosomal subunit protein uS14c (100 aa).

Belongs to the universal ribosomal protein uS14 family. As to quaternary structure, part of the 30S ribosomal subunit.

The protein resides in the plastid. The protein localises to the chloroplast. Binds 16S rRNA, required for the assembly of 30S particles. The sequence is that of Small ribosomal subunit protein uS14c from Thalassiosira pseudonana (Marine diatom).